The chain runs to 520 residues: CBL-interacting serine/threonine-protein kinase 18 (520 aa).

Disordered stretches follow at residues 1–29 (MAQALAQPPLVVTTVVPDPPPPPPPPHPK) and 48–67 (TDKDGNISPQSPRSPRSPRN). Positions 17–29 (PDPPPPPPPPHPK) are enriched in pro residues. Residues 55–66 (SPQSPRSPRSPR) are compositionally biased toward low complexity. Residues 74 to 328 (YELGKLLGHG…IPEIMKNRWF (255 aa)) form the Protein kinase domain. ATP is bound by residues 80–88 (LGHGTFAKV) and Lys-103. The active-site Proton acceptor is the Asp-196. The interval 214–243 (DFGLSAVAEQLRQDGLCHTFCGTPAYIAPE) is activation loop. The residue at position 218 (Ser-218) is a Phosphoserine. Thr-232 is subject to Phosphothreonine. The segment at 349-368 (EDEEEEASSSGRSSTVSESD) is disordered. Residues 356 to 366 (SSSGRSSTVSE) show a composition bias toward low complexity. Positions 382–406 (PRPSSLNAFDIISFSSGFDLSGLFE) constitute an NAF domain. Positions 410–439 (GEGTRFVSGAPVSKIISKLEEIAKIVSFTV) are PPI.

Belongs to the protein kinase superfamily. CAMK Ser/Thr protein kinase family. SNF1 subfamily. As to quaternary structure, interacts with CBL1 and CBL9. Mn(2+) is required as a cofactor.

It catalyses the reaction L-seryl-[protein] + ATP = O-phospho-L-seryl-[protein] + ADP + H(+). The enzyme catalyses L-threonyl-[protein] + ATP = O-phospho-L-threonyl-[protein] + ADP + H(+). In terms of biological role, CIPK serine-threonine protein kinases interact with CBL proteins. Binding of a CBL protein to the regulatory NAF domain of CIPK protein lead to the activation of the kinase in a calcium-dependent manner. This is CBL-interacting serine/threonine-protein kinase 18 (CIPK18) from Arabidopsis thaliana (Mouse-ear cress).